Consider the following 875-residue polypeptide: DNA mismatch repair protein MutS (875 aa).

625-632 lines the ATP pocket; it reads GPNMGGKS.

The protein belongs to the DNA mismatch repair MutS family.

In terms of biological role, this protein is involved in the repair of mismatches in DNA. It is possible that it carries out the mismatch recognition step. This protein has a weak ATPase activity. This Symbiobacterium thermophilum (strain DSM 24528 / JCM 14929 / IAM 14863 / T) protein is DNA mismatch repair protein MutS.